The sequence spans 158 residues: U4/U6.U5 small nuclear ribonucleoprotein 27 kDa protein (158 aa).

The tract at residues 1-102 is disordered; it reads MGRSRSRSPE…AEDLEGKTEE (102 aa). Positions 13-59 are enriched in basic residues; the sequence is RERRRSRSASRERERRRRERSRSRERRRSRSRSPHRRRSRSPRRHRS. Over residues 66–101 the composition is skewed to basic and acidic residues; the sequence is RLKDRRDDDKKEPKESKGGGSKERQLAAEDLEGKTE.

Belongs to the SNUT3 family. In terms of assembly, part of a tri-snRNP complex.

It is found in the nucleus. May play a role in mRNA splicing. This Xenopus laevis (African clawed frog) protein is U4/U6.U5 small nuclear ribonucleoprotein 27 kDa protein (snrnp27).